A 202-amino-acid polypeptide reads, in one-letter code: Large ribosomal subunit protein bL25 (202 aa).

The segment at 182-202 (QTAPEEEEGTAAETTEPELAE) is disordered. Over residues 185-202 (PEEEEGTAAETTEPELAE) the composition is skewed to acidic residues.

Belongs to the bacterial ribosomal protein bL25 family. CTC subfamily. Part of the 50S ribosomal subunit; part of the 5S rRNA/L5/L18/L25 subcomplex. Contacts the 5S rRNA. Binds to the 5S rRNA independently of L5 and L18.

Its function is as follows. This is one of the proteins that binds to the 5S RNA in the ribosome where it forms part of the central protuberance. This Enterococcus faecalis (strain ATCC 700802 / V583) protein is Large ribosomal subunit protein bL25.